The chain runs to 325 residues: Germination protease (325 aa).

The propeptide occupies 1-7 (MYNVRTD).

The protein belongs to the peptidase A25 family. Homotetramer. In terms of processing, autoproteolytically processed. The inactive tetrameric zymogen termed p46 autoprocesses to a smaller form termed p41, which is active only during spore germination.

It carries out the reaction Endopeptidase action with P4 Glu or Asp, P1 preferably Glu &gt; Asp, P1' hydrophobic and P2' Ala.. Initiates the rapid degradation of small, acid-soluble proteins during spore germination. This Clostridium perfringens (strain ATCC 13124 / DSM 756 / JCM 1290 / NCIMB 6125 / NCTC 8237 / Type A) protein is Germination protease.